The sequence spans 348 residues: Uroporphyrinogen decarboxylase (348 aa).

Residues 23 to 27 (RQAGR), Asp72, Tyr148, Ser203, and His316 contribute to the substrate site.

The protein belongs to the uroporphyrinogen decarboxylase family. Homodimer.

Its subcellular location is the cytoplasm. The enzyme catalyses uroporphyrinogen III + 4 H(+) = coproporphyrinogen III + 4 CO2. The protein operates within porphyrin-containing compound metabolism; protoporphyrin-IX biosynthesis; coproporphyrinogen-III from 5-aminolevulinate: step 4/4. Its function is as follows. Catalyzes the decarboxylation of four acetate groups of uroporphyrinogen-III to yield coproporphyrinogen-III. This chain is Uroporphyrinogen decarboxylase, found in Myxococcus xanthus (strain DK1622).